Here is a 467-residue protein sequence, read N- to C-terminus: Asparagine--tRNA ligase (467 aa).

This sequence belongs to the class-II aminoacyl-tRNA synthetase family. Homodimer.

The protein localises to the cytoplasm. It catalyses the reaction tRNA(Asn) + L-asparagine + ATP = L-asparaginyl-tRNA(Asn) + AMP + diphosphate + H(+). The protein is Asparagine--tRNA ligase of Baumannia cicadellinicola subsp. Homalodisca coagulata.